A 131-amino-acid chain; its full sequence is Single-stranded DNA-binding protein 1 (131 aa).

Residues 1-103 form the SSB domain; that stretch reads MYNKVIAIGR…VLCQSFQLLE (103 aa).

In terms of assembly, homotetramer.

The chain is Single-stranded DNA-binding protein 1 (ssb1) from Streptococcus pyogenes serotype M6 (strain ATCC BAA-946 / MGAS10394).